The chain runs to 311 residues: Malate dehydrogenase (311 aa).

Residues 7 to 13 (GAAGGIG) and aspartate 34 contribute to the NAD(+) site. Arginine 81 and arginine 87 together coordinate substrate. NAD(+)-binding positions include asparagine 94 and 117–119 (ITN). 2 residues coordinate substrate: asparagine 119 and arginine 153. Histidine 177 (proton acceptor) is an active-site residue. Methionine 227 is an NAD(+) binding site.

It belongs to the LDH/MDH superfamily. MDH type 1 family. Homodimer.

The enzyme catalyses (S)-malate + NAD(+) = oxaloacetate + NADH + H(+). In terms of biological role, catalyzes the reversible oxidation of malate to oxaloacetate. This Aliivibrio salmonicida (strain LFI1238) (Vibrio salmonicida (strain LFI1238)) protein is Malate dehydrogenase.